The following is a 350-amino-acid chain: Blue-sensitive opsin (350 aa).

The Extracellular portion of the chain corresponds to 1–36 (MNGTEGPNFYVPMSNATGVVRSPFEYPQYYLAEPWA). 2 N-linked (GlcNAc...) asparagine glycosylation sites follow: Asn-2 and Asn-15. A helical membrane pass occupies residues 37–61 (FSILAAYMFFLIITGFPINFLTLYV). The Cytoplasmic segment spans residues 62–73 (TIEHKKLRTPLN). A helical membrane pass occupies residues 74-98 (YILLNLAVADLFMVFGGFTTTMYTS). Residues 99-113 (MHGYFVFGETGCNLE) lie on the Extracellular side of the membrane. Cys-110 and Cys-187 are joined by a disulfide. Residues 114–133 (GYFATLGGEISLWSLVVLAI) traverse the membrane as a helical segment. Residues 134 to 152 (ERWVVVCKPISNFRFGENH) are Cytoplasmic-facing. The helical transmembrane segment at 153–176 (AIMGLTLTWVMANACAMPPLFGWS) threads the bilayer. Topologically, residues 177-202 (RYIPEGLQCSCGIDYYTLKPEVNNES) are extracellular. Asn-200 is a glycosylation site (N-linked (GlcNAc...) asparagine). Residues 203-230 (FVIYMFLVHFTIPLTIISFCYGRLVCAV) traverse the membrane as a helical segment. The Cytoplasmic portion of the chain corresponds to 231 to 252 (KEAAAQQQESETTQRAEREVTR). Residues 253–276 (MVVIMVISFLVCWIPYASVAWYIF) traverse the membrane as a helical segment. At 277–284 (THQGSTFG) the chain is on the extracellular side. A helical transmembrane segment spans residues 285-309 (PIFMTVPSFFAKSSSIYNPMIYICM). An N6-(retinylidene)lysine modification is found at Lys-296. Over 310–350 (NKQFRNCMITTLFCGKNPFEGEEEGSTTKTEASAVSSVSPA) the chain is Cytoplasmic. The interval 330–350 (GEEEGSTTKTEASAVSSVSPA) is disordered.

The protein belongs to the G-protein coupled receptor 1 family. Opsin subfamily. Post-translationally, phosphorylated on some or all of the serine and threonine residues present in the C-terminal region. In terms of tissue distribution, rod shaped photoreceptor cells which mediates vision in dim light.

The protein localises to the membrane. Visual pigments are the light-absorbing molecules that mediate vision. They consist of an apoprotein, opsin, covalently linked to cis-retinal. The protein is Blue-sensitive opsin of Conger conger (Conger eel).